The following is a 243-amino-acid chain: 6-carboxyhexanoate--CoA ligase (243 aa).

This sequence belongs to the BioW family. Homodimer. Mg(2+) serves as cofactor.

It carries out the reaction heptanedioate + ATP + CoA = 6-carboxyhexanoyl-CoA + AMP + diphosphate. Its pathway is metabolic intermediate metabolism; pimeloyl-CoA biosynthesis; pimeloyl-CoA from pimelate: step 1/1. Its function is as follows. Catalyzes the transformation of pimelate into pimeloyl-CoA with concomitant hydrolysis of ATP to AMP. The protein is 6-carboxyhexanoate--CoA ligase of Thermocrinis albus (strain DSM 14484 / JCM 11386 / HI 11/12).